Here is a 633-residue protein sequence, read N- to C-terminus: Breast carcinoma-amplified sequence 1 homolog (633 aa).

2 disordered regions span residues 1-34 (MGNQMSVPLRPGDQEHDPGADTCKVTSDNECVQN) and 57-422 (SSKD…KLFW). Polar residues-rich tracts occupy residues 24 to 34 (KVTSDNECVQN) and 57 to 68 (SSKDNVATSSPK). Phosphoserine is present on S127. The span at 278 to 288 (VDTTENSSSIM) shows a compositional bias: polar residues. Positions 300 to 318 (TETKKDPEDTKATKADSVC) are enriched in basic and acidic residues. A Phosphoserine modification is found at S328. The residue at position 330 (T330) is a Phosphothreonine. A compositionally biased stretch (polar residues) spans 359 to 378 (NSPTTSANLKSDKANFTPQE). A Phosphoserine modification is found at S360. The segment covering 400–410 (SEGRDSGKEKA) has biased composition (basic and acidic residues). Phosphoserine is present on residues S425 and S443. A disordered region spans residues 454-633 (ESSLQTVDLS…VSIGPVGKSK (180 aa)). A compositionally biased stretch (basic and acidic residues) spans 471–481 (TDVKVKEESKP). A compositionally biased stretch (polar residues) spans 510–522 (KDSSCQTSNSVEK). Phosphothreonine is present on T523. S525 carries the phosphoserine modification. A compositionally biased stretch (basic and acidic residues) spans 537 to 555 (KNKETSSSKDKKSVDKKSA). A phosphoserine mark is found at S601 and S615. The tract at residues 614–633 (MSDAQVQTDPVSIGPVGKSK) is interacts with DYNLL1 AND DYNLL2.

Homodimer. Interacts with DYNLL1 and DYNLL2. As to expression, highly expressed in the brain and, more specifically, in oligodendrocytes. Expressed in the Schwann cells (at protein level).

It localises to the cytoplasm. In terms of biological role, required for myelination. This chain is Breast carcinoma-amplified sequence 1 homolog (Bcas1), found in Mus musculus (Mouse).